A 340-amino-acid chain; its full sequence is N-acetyl-gamma-glutamyl-phosphate reductase (340 aa).

The active site involves C146.

The protein belongs to the NAGSA dehydrogenase family. Type 1 subfamily.

Its subcellular location is the cytoplasm. The catalysed reaction is N-acetyl-L-glutamate 5-semialdehyde + phosphate + NADP(+) = N-acetyl-L-glutamyl 5-phosphate + NADPH + H(+). It participates in amino-acid biosynthesis; L-arginine biosynthesis; N(2)-acetyl-L-ornithine from L-glutamate: step 3/4. Catalyzes the NADPH-dependent reduction of N-acetyl-5-glutamyl phosphate to yield N-acetyl-L-glutamate 5-semialdehyde. This chain is N-acetyl-gamma-glutamyl-phosphate reductase, found in Rubrobacter xylanophilus (strain DSM 9941 / JCM 11954 / NBRC 16129 / PRD-1).